The chain runs to 471 residues: Cysteine--tRNA ligase (471 aa).

Position 30 (Cys-30) interacts with Zn(2+). The 'HIGH' region motif lies at 32–42 (PTVYNFAHIGN). Positions 212, 237, and 241 each coordinate Zn(2+). A 'KMSKS' region motif is present at residues 270–274 (KMSKS). Lys-273 lines the ATP pocket.

It belongs to the class-I aminoacyl-tRNA synthetase family. As to quaternary structure, monomer. Zn(2+) serves as cofactor.

It is found in the cytoplasm. It catalyses the reaction tRNA(Cys) + L-cysteine + ATP = L-cysteinyl-tRNA(Cys) + AMP + diphosphate. In Leptospira interrogans serogroup Icterohaemorrhagiae serovar Lai (strain 56601), this protein is Cysteine--tRNA ligase.